The sequence spans 251 residues: NADPH-dependent oxidoreductase (251 aa).

The protein belongs to the flavin oxidoreductase frp family. The cofactor is FMN.

In terms of biological role, reduces FMN, organic nitro compounds and disulfide DTNB. Involved in maintenance of the cellular redox state and the disulfide stress response. The sequence is that of NADPH-dependent oxidoreductase (nfrA) from Staphylococcus aureus (strain Mu50 / ATCC 700699).